The following is a 143-amino-acid chain: Large ribosomal subunit protein uL11 (143 aa).

Belongs to the universal ribosomal protein uL11 family. In terms of assembly, part of the ribosomal stalk of the 50S ribosomal subunit. Interacts with L10 and the large rRNA to form the base of the stalk. L10 forms an elongated spine to which L12 dimers bind in a sequential fashion forming a multimeric L10(L12)X complex. One or more lysine residues are methylated.

Its function is as follows. Forms part of the ribosomal stalk which helps the ribosome interact with GTP-bound translation factors. This Albidiferax ferrireducens (strain ATCC BAA-621 / DSM 15236 / T118) (Rhodoferax ferrireducens) protein is Large ribosomal subunit protein uL11.